The sequence spans 336 residues: Ribosomal RNA large subunit methyltransferase F (336 aa).

The segment at 1-24 is disordered; it reads MPRPTSPHPDAERKSASPLHPRNR.

It belongs to the methyltransferase superfamily. METTL16/RlmF family.

The protein resides in the cytoplasm. It carries out the reaction adenosine(1618) in 23S rRNA + S-adenosyl-L-methionine = N(6)-methyladenosine(1618) in 23S rRNA + S-adenosyl-L-homocysteine + H(+). Functionally, specifically methylates the adenine in position 1618 of 23S rRNA. This Pseudomonas aeruginosa (strain LESB58) protein is Ribosomal RNA large subunit methyltransferase F.